A 605-amino-acid chain; its full sequence is Arginyl-tRNA--protein transferase 2 (605 aa).

A compositionally biased stretch (low complexity) spans 496 to 513 (KVSSSSSSPQASETLLES). The segment at 496-549 (KVSSSSSSPQASETLLESTSEHEDMEQGDTNDDDDEMYNSDEDSDSDSSSSRNR) is disordered. Residues 518–541 (EDMEQGDTNDDDDEMYNSDEDSDS) show a composition bias toward acidic residues.

Belongs to the R-transferase family.

The catalysed reaction is an N-terminal L-alpha-aminoacyl-[protein] + L-arginyl-tRNA(Arg) = an N-terminal L-arginyl-L-aminoacyl-[protein] + tRNA(Arg) + H(+). Functionally, involved in the post-translational conjugation of arginine to the N-terminal aspartate or glutamate of a protein. This arginylation is required for degradation of the protein via the ubiquitin pathway. Component of the N-end rule pathway with ATE1 and PRT6. The N-end rule pathway regulates seed after-ripening, seedling sugar sensitivity, seedling lipid breakdown, and abscisic acid (ABA) sensitivity of germination. The end-rule pathway regulates various aspects of leaf and shoot development. Involved in the oxygen-dependent N-arginylation of RAP2-12, an activator of hypoxic gene expression. This N-terminal modification leads to ubiquitination by PRT6 and subsequent degradation of RAP2-12 under aerobic conditions. Involved in disease resistance. The end-rule pathway plays a role in regulating the timing and amplitude of the immune response following infection with the bacterial pathogen Pseudomonas syringae pv tomato. Regulates the biosynthesis of plant-defense metabolites such as glucosinolates, and the biosynthesis and response to the phytohormone jasmonate (JA), which plays a key role in plant immunity. The sequence is that of Arginyl-tRNA--protein transferase 2 from Arabidopsis thaliana (Mouse-ear cress).